The chain runs to 476 residues: Glycogen synthase (476 aa).

K15 is a binding site for ADP-alpha-D-glucose.

This sequence belongs to the glycosyltransferase 1 family. Bacterial/plant glycogen synthase subfamily.

It catalyses the reaction [(1-&gt;4)-alpha-D-glucosyl](n) + ADP-alpha-D-glucose = [(1-&gt;4)-alpha-D-glucosyl](n+1) + ADP + H(+). Its pathway is glycan biosynthesis; glycogen biosynthesis. Its function is as follows. Synthesizes alpha-1,4-glucan chains using ADP-glucose. In Bacillus cereus (strain Q1), this protein is Glycogen synthase.